A 470-amino-acid polypeptide reads, in one-letter code: Protein escargot (470 aa).

Positions 271–309 (LNLNTSQPGEQAAAKTGDMSPETMPNASAKKDKNQPPRY) are disordered. C2H2-type zinc fingers lie at residues 309–331 (YQCP…QQFH), 344–366 (FSCK…IRTH), 370–392 (CKCN…IRTH), and 398–420 (FSCQ…LQTH). Residues 426–449 (YSCTSCSKTFSRMSLLTKHSEGGC) form a C2H2-type 5; atypical zinc finger. The interval 448–470 (GCPGGSAGSSSSSELNYAGYAEP) is disordered.

The protein belongs to the snail C2H2-type zinc-finger protein family. As to expression, expression is complex and dynamic. In early embryogenesis, expression begins on the dorsal side of the embryo. Expressed in a pattern of longitudinal stripes early in germband elongation. Later in embryogenesis, expression is in cells that correspond to the wing, haltere, leg and genital imaginal disks and the abdominal histoblasts. In the embryonic leg disk, expression is restricted to imaginal cells. Also expressed in the central nervous system (CNS), tracheae and head of stage 14 embryos. CNS and tracheal expression decays during later stages, though head expression persists until late in embryogenesis. In third instar larvae, expression is seen in the brain and in regions of many imaginal tissues including the eye-antennal, wing, leg and haltere disks. Expressed in embryonic, larval and adult male germline stem cells and in the somatic cells of the embryonic gonads.

Its subcellular location is the nucleus. Transcription factor that can both stimulate and repress transcription. Binds to the consensus DNA sequence 5'-A/GCAGGTG-3'. Regulates cell motility and adhesion during tracheal morphogenesis by stimulating transcription of the DE-cadherin gene shg at branch tips, thereby promoting tracheal tube fusion. Maintains diploidy in imaginal cells by inhibiting the transcription of genes required for endoreplication. Required for development of the genital disk and acts as an intrinsic determinant of wing cell fate. The somatic protein is required for maintenance of male germ cells. Acts with other members of the snail protein family to control embryonic central nervous system development. The chain is Protein escargot (esg) from Drosophila melanogaster (Fruit fly).